We begin with the raw amino-acid sequence, 550 residues long: Glucose-6-phosphate isomerase (550 aa).

D-glucose 6-phosphate is bound by residues 163–164, 214–219, glutamine 358, glutamate 362, histidine 393, and lysine 515; these read GS and SKTFTT. The active-site Proton donor is glutamate 362. Active-site residues include histidine 393 and lysine 515.

Belongs to the GPI family. Homodimer.

The protein localises to the cytoplasm. The catalysed reaction is alpha-D-glucose 6-phosphate = beta-D-fructose 6-phosphate. It functions in the pathway carbohydrate degradation; glycolysis; D-glyceraldehyde 3-phosphate and glycerone phosphate from D-glucose: step 2/4. Functionally, in the cytoplasm, catalyzes the conversion of glucose-6-phosphate to fructose-6-phosphate, the second step in glycolysis, and the reverse reaction during gluconeogenesis. The sequence is that of Glucose-6-phosphate isomerase (PGI1) from Candida albicans (strain SC5314 / ATCC MYA-2876) (Yeast).